Reading from the N-terminus, the 154-residue chain is uncharacterized protein (154 aa).

Residues 14-146 (AMNLYRVFAR…LIVLLKKAGI (133 aa)) enclose the HTH marR-type domain. The H-T-H motif DNA-binding region spans 60–83 (LQQIGSRLLLVSGNVTYVIDKLER).

This is an uncharacterized protein from Bacillus subtilis (strain 168).